The following is a 422-amino-acid chain: Calpain-2 catalytic subunit (422 aa).

The Calpain catalytic domain maps to 1–66; it reads QKLIRIRNPW…YSRLEICNLT (66 aa). The active site involves Asn8. 3 residues coordinate Ca(2+): Glu14, Asp21, and Glu45. Positions 67–236 are domain III; it reads PDTLTSDTYK…KKADYQAVDD (170 aa). The tract at residues 237–251 is linker; sequence EIEADLEEADVSEDD. The tract at residues 252–422 is domain IV; it reads IDDGFRRLFA…LISWLCFSVL (171 aa). The Ca(2+) site is built by Ala264, Asp267, Glu269, Glu274, Asp307, Asp309, Thr311, Lys313, Glu318, Asp337, Asp339, Ser341, Thr343, Glu348, Asp380, and Asn383. EF-hand domains follow at residues 294-327 and 324-359; these read LSIE…TKIQ and TKIQ…AGFK. Residues 389–422 form the EF-hand 3 domain; the sequence is VRLETLFKIFKQLDPDNTGMIQLDLISWLCFSVL.

The protein belongs to the peptidase C2 family. As to quaternary structure, forms a heterodimer with a small (regulatory) subunit (CAPNS1). Interacts with CPEB3; this leads to cleavage of CPEB3. Ca(2+) serves as cofactor. Ubiquitous.

The protein localises to the cytoplasm. Its subcellular location is the cell membrane. It carries out the reaction Broad endopeptidase specificity.. Its activity is regulated as follows. Activated by 200-1000 micromolar concentrations of calcium and inhibited by calpastatin. In terms of biological role, calcium-regulated non-lysosomal thiol-protease which catalyzes limited proteolysis of substrates involved in cytoskeletal remodeling and signal transduction. Proteolytically cleaves MYOC at 'Arg-226'. Proteolytically cleaves CPEB3 following neuronal stimulation which abolishes CPEB3 translational repressor activity, leading to translation of CPEB3 target mRNAs. The polypeptide is Calpain-2 catalytic subunit (CAPN2) (Oryctolagus cuniculus (Rabbit)).